We begin with the raw amino-acid sequence, 154 residues long: Transcriptional repressor NrdR (154 aa).

The segment at 3–34 (CPTCQYNGTRVVDSRPADDGNSIRRRRECEKC) is a zinc-finger region. Residues 49–139 (LIVVKKDGAR…VYRQFKDISV (91 aa)) enclose the ATP-cone domain.

This sequence belongs to the NrdR family. It depends on Zn(2+) as a cofactor.

Its function is as follows. Negatively regulates transcription of bacterial ribonucleotide reductase nrd genes and operons by binding to NrdR-boxes. In Listeria monocytogenes serotype 4a (strain HCC23), this protein is Transcriptional repressor NrdR.